The primary structure comprises 108 residues: UPF0102 protein Shewmr4_3685 (108 aa).

It belongs to the UPF0102 family.

The sequence is that of UPF0102 protein Shewmr4_3685 from Shewanella sp. (strain MR-4).